The chain runs to 112 residues: Ribonuclease P protein component (112 aa).

Belongs to the RnpA family. In terms of assembly, consists of a catalytic RNA component (M1 or rnpB) and a protein subunit.

The enzyme catalyses Endonucleolytic cleavage of RNA, removing 5'-extranucleotides from tRNA precursor.. RNaseP catalyzes the removal of the 5'-leader sequence from pre-tRNA to produce the mature 5'-terminus. It can also cleave other RNA substrates such as 4.5S RNA. The protein component plays an auxiliary but essential role in vivo by binding to the 5'-leader sequence and broadening the substrate specificity of the ribozyme. In Pelotomaculum thermopropionicum (strain DSM 13744 / JCM 10971 / SI), this protein is Ribonuclease P protein component.